The following is a 330-amino-acid chain: Aspartate--ammonia ligase (330 aa).

The protein belongs to the class-II aminoacyl-tRNA synthetase family. AsnA subfamily.

It localises to the cytoplasm. It carries out the reaction L-aspartate + NH4(+) + ATP = L-asparagine + AMP + diphosphate + H(+). The protein operates within amino-acid biosynthesis; L-asparagine biosynthesis; L-asparagine from L-aspartate (ammonia route): step 1/1. In Shigella sonnei (strain Ss046), this protein is Aspartate--ammonia ligase.